We begin with the raw amino-acid sequence, 712 residues long: Auxin response factor 15 (712 aa).

Residues 142 to 244 constitute a DNA-binding region (TF-B3); sequence FCKTLTASDT…ELRLGVRRAA (103 aa).

It belongs to the ARF family. Homo and heterodimers. Expressed in roots, culms, leaves and young panicles.

Its subcellular location is the nucleus. Auxin response factors (ARFs) are transcriptional factors that bind specifically to the DNA sequence 5'-TGTCTC-3' found in the auxin-responsive promoter elements (AuxREs). The polypeptide is Auxin response factor 15 (ARF15) (Oryza sativa subsp. japonica (Rice)).